The chain runs to 921 residues: MGLGIDPSVAITALIVVILVVPMDCQRPQLVNIGAVFAFDSVIGRAAKVALEAAVSDVNNDKSFLKETELRLLMEDSACNVFRGSFGAFELLEKEVVAMIGPISSSVAHTISDIAKGLHFPLVSFAATDPTLSALQFPFFLRTTPNDAHQMSALVDLINFYGWKEVISVYSDDELGRNGVSALDDELYKKRSRISYKVPLSVHSDEKFLTNALNKSKSIGPRVYILHFGPDPLLRIFDIAQKLQMMTHEYVWLATDWLSVTLDSLSDKGTLKRLEGVVGLRQHIPESVKMEHFTHKLQSNRSMNAYALHAYDTVWMIAHGIEELLNEGINITFSYSEKLLHARGTKLHLEKIKFFNSGELLLEKLLKVNFTGIAGQVQFGSGRNVIGCDYEIINVNKTDVHTVGFWSKNGGFSVVAPKTRHSQKKTSFVSDEKLGDITWPGGGREKPRGWVIADSADPLKIVVPRRVSFVEFVTEEKNSSHRIQGFCIDVFIEALKFVPYSVPYIFEPFGNGHSSPNYNHLIQMVTDGVYDAAVGDIAIVPSRSKLVDFSQPYASTGLVVVIPANDDNATWIFLRPFTSRLWCVVLVSFLVIAVVIWILEHRINEDFRGPPRRQLSTMLLFSFSTLFKRNQEDTISNLARLVMIVWLFLLMVLTASYTANLTSILTVQQLPSAITGIDSLRASEVPIGYQAGTFTLEYLTYSLGMARSRLVPLDSTEEYEKALKLGPTNWGGVAAIVDELPYIELFLAERTGFKIVGEPFMHRGWGFAFKRDSPLAIDMSTAILKLSETRKLQEIRKKWLCKTNCAGKSNWNPEPNQLHLKSFKGLYLVCIAITVSAFLVFVLRMIRQFVRYRRMERTSSMPRASWSASPTLRLRELVFDFVEFVDEKEEAIKRMFRRSDDSNNNPSHVGEVQADTEVPRN.

A signal peptide spans 1–25 (MGLGIDPSVAITALIVVILVVPMDC). Over 26-580 (QRPQLVNIGA…WIFLRPFTSR (555 aa)) the chain is Extracellular. Asparagine 214, asparagine 300, asparagine 330, asparagine 369, asparagine 396, asparagine 478, and asparagine 568 each carry an N-linked (GlcNAc...) asparagine glycan. Residues 581-601 (LWCVVLVSFLVIAVVIWILEH) form a helical membrane-spanning segment. Topologically, residues 602–608 (RINEDFR) are cytoplasmic. The chain crosses the membrane as a helical span at residues 609–629 (GPPRRQLSTMLLFSFSTLFKR). Topologically, residues 630–640 (NQEDTISNLAR) are cytoplasmic. A helical transmembrane segment spans residues 641–661 (LVMIVWLFLLMVLTASYTANL). Residues 662–822 (TSILTVQQLP…PEPNQLHLKS (161 aa)) are Extracellular-facing. Residues 823-843 (FKGLYLVCIAITVSAFLVFVL) form a helical membrane-spanning segment. Residues 844–921 (RMIRQFVRYR…VQADTEVPRN (78 aa)) are Cytoplasmic-facing. Residues 896–921 (FRRSDDSNNNPSHVGEVQADTEVPRN) form a disordered region.

Belongs to the glutamate-gated ion channel (TC 1.A.10.1) family. In terms of assembly, may form heteromers. In terms of tissue distribution, expressed predominantly in leaves and siliques. Also detected in roots.

It localises to the membrane. Functionally, glutamate-gated receptor that probably acts as a non-selective cation channel. May be involved in light-signal transduction and calcium homeostasis via the regulation of calcium influx into cells. This is Glutamate receptor 3.7 (GLR3.7) from Arabidopsis thaliana (Mouse-ear cress).